A 204-amino-acid polypeptide reads, in one-letter code: Urease accessory protein UreG (204 aa).

13–20 (GPVGSGKT) lines the GTP pocket.

The protein belongs to the SIMIBI class G3E GTPase family. UreG subfamily. As to quaternary structure, homodimer. UreD, UreF and UreG form a complex that acts as a GTP-hydrolysis-dependent molecular chaperone, activating the urease apoprotein by helping to assemble the nickel containing metallocenter of UreC. The UreE protein probably delivers the nickel.

It is found in the cytoplasm. In terms of biological role, facilitates the functional incorporation of the urease nickel metallocenter. This process requires GTP hydrolysis, probably effectuated by UreG. The protein is Urease accessory protein UreG of Acinetobacter baylyi (strain ATCC 33305 / BD413 / ADP1).